The following is a 120-amino-acid chain: UPF0344 protein lmo2265 (120 aa).

Helical transmembrane passes span Gly-3–Ile-23, Met-33–Val-53, Ile-62–Leu-82, and Gly-92–Leu-112.

The protein belongs to the UPF0344 family.

The protein localises to the cell membrane. This Listeria monocytogenes serovar 1/2a (strain ATCC BAA-679 / EGD-e) protein is UPF0344 protein lmo2265.